Reading from the N-terminus, the 123-residue chain is ATP synthase epsilon chain (123 aa).

The protein belongs to the ATPase epsilon chain family. F-type ATPases have 2 components, CF(1) - the catalytic core - and CF(0) - the membrane proton channel. CF(1) has five subunits: alpha(3), beta(3), gamma(1), delta(1), epsilon(1). CF(0) has three main subunits: a, b and c.

Its subcellular location is the cell inner membrane. Produces ATP from ADP in the presence of a proton gradient across the membrane. This is ATP synthase epsilon chain (atpC) from Helicobacter pylori (strain ATCC 700392 / 26695) (Campylobacter pylori).